Reading from the N-terminus, the 78-residue chain is MSEAEIKDKVYDIIVSKMGVNKDQIKPESKFSDDLGADSLDTVELIMELENEFGVQIPDEDAEKISTVQQAIDYIVKK.

Positions 4 to 78 (AEIKDKVYDI…QQAIDYIVKK (75 aa)) constitute a Carrier domain. S39 carries the O-(pantetheine 4'-phosphoryl)serine modification.

It belongs to the acyl carrier protein (ACP) family. Post-translationally, 4'-phosphopantetheine is transferred from CoA to a specific serine of apo-ACP by AcpS. This modification is essential for activity because fatty acids are bound in thioester linkage to the sulfhydryl of the prosthetic group.

The protein resides in the cytoplasm. It participates in lipid metabolism; fatty acid biosynthesis. Its function is as follows. Carrier of the growing fatty acid chain in fatty acid biosynthesis. This chain is Acyl carrier protein, found in Chlorobium limicola (strain DSM 245 / NBRC 103803 / 6330).